Reading from the N-terminus, the 329-residue chain is DNA-directed RNA polymerase subunit alpha (329 aa).

The interval 1 to 235 is alpha N-terminal domain (alpha-NTD); that stretch reads MQNSIMDFLR…EQLEAFVDLR (235 aa). Residues 249–329 are alpha C-terminal domain (alpha-CTD); that stretch reads FEPILLRPVD…NWPPSSILDE (81 aa).

Belongs to the RNA polymerase alpha chain family. In terms of assembly, homodimer. The RNAP catalytic core consists of 2 alpha, 1 beta, 1 beta' and 1 omega subunit. When a sigma factor is associated with the core the holoenzyme is formed, which can initiate transcription.

The catalysed reaction is RNA(n) + a ribonucleoside 5'-triphosphate = RNA(n+1) + diphosphate. Its function is as follows. DNA-dependent RNA polymerase catalyzes the transcription of DNA into RNA using the four ribonucleoside triphosphates as substrates. The sequence is that of DNA-directed RNA polymerase subunit alpha from Buchnera aphidicola subsp. Acyrthosiphon pisum (strain APS) (Acyrthosiphon pisum symbiotic bacterium).